A 625-amino-acid polypeptide reads, in one-letter code: Tumor necrosis factor receptor superfamily member 11A (625 aa).

The first 30 residues, 1-30 (MAPRARRRRQLPAPLLALCVLLVPLQVTLQ), serve as a signal peptide directing secretion. The Extracellular portion of the chain corresponds to 31–214 (VTPPCTQERH…PKEAQAYLPS (184 aa)). Disulfide bonds link Cys-35–Cys-47, Cys-48–Cys-61, Cys-51–Cys-69, Cys-72–Cys-87, Cys-93–Cys-113, Cys-115–Cys-128, Cys-125–Cys-127, Cys-134–Cys-152, and Cys-155–Cys-170. 4 TNFR-Cys repeats span residues 35 to 69 (CTQE…DSVC), 72 to 113 (CGPD…PRRC), 115 to 152 (CTAG…DTVC), and 155 to 195 (CLLG…DVVC). The N-linked (GlcNAc...) asparagine glycan is linked to Asn-106. Na(+) is bound by residues Cys-134, Ala-135, Phe-138, Ser-161, and Val-163. The N-linked (GlcNAc...) asparagine glycan is linked to Asn-175. An intrachain disulfide couples Cys-176 to Cys-195. The chain crosses the membrane as a helical span at residues 215 to 234 (LIVLLLFISVVVVAAIIFGV). At 235-625 (YYRKGGKALT…HTQGSGQCAE (391 aa)) the chain is on the cytoplasmic side. Disordered regions lie at residues 331–356 (TQGD…STGS), 388–413 (GTES…MPVS), and 479–524 (SMAE…FISS). Residues 499–511 (SGSSPSDQPPASG) show a composition bias toward low complexity. The span at 512 to 524 (NVTGNSNSTFISS) shows a compositional bias: polar residues. Positions 532 to 537 (GDIIVV) are required for interaction with EEIG1 and osteoclast differentiation. The segment at 542-625 (TSQEGPGSAE…HTQGSGQCAE (84 aa)) is disordered. Positions 543–558 (SQEGPGSAEPESEPVG) are enriched in low complexity. Residues 561–571 (VQEETLAHRDS) show a composition bias toward basic and acidic residues. Ser-571 is modified (phosphoserine). Polar residues predominate over residues 603–625 (RPVQEQGGAQTSLHTQGSGQCAE).

Binds to the clefts between the subunits of the TNFSF11 ligand trimer to form a heterohexamer. Part of a complex composed of EEIG1, TNFRSF11A/RANK, PLCG2, GAB2, TEC and BTK; complex formation increases in the presence of TNFSF11/RANKL. Interacts with TRAF1, TRAF2, TRAF3, TRAF5 and TRAF6. Interacts (via cytoplasmic domain) with GAB2. Interacts (via cytoplasmic domain); with EEIG1 (via N-terminus); when in the presence of TNFSF11/RANKL. As to expression, ubiquitous expression with high levels in trabecular bone, thymus, small intestine, lung, brain and kidney. Weakly expressed in spleen and bone marrow.

Its subcellular location is the cell membrane. It is found in the membrane raft. Functionally, receptor for TNFSF11/RANKL/TRANCE/OPGL; essential for RANKL-mediated osteoclastogenesis. Its interaction with EEIG1 promotes osteoclastogenesis via facilitating the transcription of NFATC1 and activation of PLCG2. Involved in the regulation of interactions between T-cells and dendritic cells. The protein is Tumor necrosis factor receptor superfamily member 11A (Tnfrsf11a) of Mus musculus (Mouse).